The following is a 457-amino-acid chain: Argininosuccinate lyase (457 aa).

This sequence belongs to the lyase 1 family. Argininosuccinate lyase subfamily.

Its subcellular location is the cytoplasm. The catalysed reaction is 2-(N(omega)-L-arginino)succinate = fumarate + L-arginine. It functions in the pathway amino-acid biosynthesis; L-arginine biosynthesis; L-arginine from L-ornithine and carbamoyl phosphate: step 3/3. This is Argininosuccinate lyase from Klebsiella pneumoniae (strain 342).